A 372-amino-acid polypeptide reads, in one-letter code: GDP-mannose 4,6 dehydratase (372 aa).

Positions 1–22 (MAHAPASCPSSRNSGDGDKGKP) are disordered. N-acetylalanine is present on Ala-2. Residues 30–35 (GITGQD), 55–58 (RRSS), 86–87 (DL), 108–112 (LGAQS), and Tyr-123 contribute to the NADP(+) site. The active site involves Thr-155. Catalysis depends on nucleophile residues Glu-157 and Tyr-179. Lys-183, His-209, and Arg-214 together coordinate NADP(+). Tyr-323 is subject to Phosphotyrosine.

Belongs to the NAD(P)-dependent epimerase/dehydratase family. GDP-mannose 4,6-dehydratase subfamily. NADP(+) is required as a cofactor.

It carries out the reaction GDP-alpha-D-mannose = GDP-4-dehydro-alpha-D-rhamnose + H2O. Its pathway is nucleotide-sugar biosynthesis; GDP-L-fucose biosynthesis via de novo pathway; GDP-L-fucose from GDP-alpha-D-mannose: step 1/2. With respect to regulation, inhibited by GDP-fucose. Catalyzes the conversion of GDP-D-mannose to GDP-4-dehydro-6-deoxy-D-mannose. This Cricetulus griseus (Chinese hamster) protein is GDP-mannose 4,6 dehydratase (GMDS).